A 314-amino-acid chain; its full sequence is Acetyl-coenzyme A carboxylase carboxyl transferase subunit alpha (314 aa).

Positions 32 to 289 (EIDMLEASLK…KKMFLKHLNE (258 aa)) constitute a CoA carboxyltransferase C-terminal domain.

The protein belongs to the AccA family. Acetyl-CoA carboxylase is a heterohexamer composed of biotin carboxyl carrier protein (AccB), biotin carboxylase (AccC) and two subunits each of ACCase subunit alpha (AccA) and ACCase subunit beta (AccD).

It localises to the cytoplasm. The enzyme catalyses N(6)-carboxybiotinyl-L-lysyl-[protein] + acetyl-CoA = N(6)-biotinyl-L-lysyl-[protein] + malonyl-CoA. It participates in lipid metabolism; malonyl-CoA biosynthesis; malonyl-CoA from acetyl-CoA: step 1/1. Functionally, component of the acetyl coenzyme A carboxylase (ACC) complex. First, biotin carboxylase catalyzes the carboxylation of biotin on its carrier protein (BCCP) and then the CO(2) group is transferred by the carboxyltransferase to acetyl-CoA to form malonyl-CoA. This Staphylococcus epidermidis (strain ATCC 12228 / FDA PCI 1200) protein is Acetyl-coenzyme A carboxylase carboxyl transferase subunit alpha.